Here is a 481-residue protein sequence, read N- to C-terminus: RAC-beta serine/threonine-protein kinase (481 aa).

An N-acetylmethionine modification is found at methionine 1. Positions 5-108 constitute a PH domain; sequence SVIKEGWLHK…WMRAIQMVAN (104 aa). Serine 34 is subject to Phosphoserine. A disulfide bond links cysteine 60 and cysteine 77. Serine 126 is modified (phosphoserine). 2 O-linked (GlcNAc) serine glycosylation sites follow: serine 128 and serine 131. In terms of domain architecture, Protein kinase spans 152–409; the sequence is FDYLKLLGKG…AKEVMEHRFF (258 aa). ATP contacts are provided by residues 158 to 166 and lysine 181; that span reads LGKGTFGKV. Aspartate 275 acts as the Proton acceptor in catalysis. 2 residues coordinate Mn(2+): asparagine 280 and aspartate 293. A disulfide bridge connects residues cysteine 297 and cysteine 311. A glycan (O-linked (GlcNAc) threonine) is linked at threonine 306. At threonine 309 the chain carries Phosphothreonine; by PDPK1. An O-linked (GlcNAc) threonine glycan is attached at threonine 313. Residues 410-481 enclose the AGC-kinase C-terminal domain; the sequence is LSINWQDVVQ…QFSYSASIRE (72 aa). Serine 447 is modified (phosphoserine). Threonine 451 is modified (phosphothreonine). Serine 474 and serine 478 each carry phosphoserine. A glycan (O-linked (GlcNAc) serine; alternate) is linked at serine 474.

Belongs to the protein kinase superfamily. AGC Ser/Thr protein kinase family. RAC subfamily. As to quaternary structure, interacts with BTBD10. Interacts with KCTD20. Interacts (via PH domain) with MTCP1, TCL1A and TCL1B; this interaction may facilitate AKT2 oligomerization and phosphorylation, hence increasing kinase activity. Interacts with PHB2; this interaction may be important for myogenic differentiation. Interacts (when phosphorylated) with CLIP3/ClipR-59; this interaction promotes AKT2 recruitment to the plasma membrane. Interacts with WDFY2/ProF (via WD repeats 1-3). Phosphorylation on Thr-309 and Ser-474 is required for full activity. Phosphorylation of the activation loop at Thr-309 by PDPK1/PDK1 is a prerequisite for full activation. Phosphorylated and activated by PDPK1/PDK1 in the presence of phosphatidylinositol 3,4,5-trisphosphate. Phosphorylation by mTORC2 in response to growth factors plays a key role in AKT1 activation: mTORC2 phosphorylates different sites depending on the context, such as Ser-474 or Ser-478, thereby facilitating subsequent phosphorylation of the activation loop by PDPK1/PDK1. In terms of processing, ubiquitinated; undergoes both 'Lys-48'- and 'Lys-63'-linked polyubiquitination. TRAF6 catalyzes 'Lys-63'-linked AKT2 ubiquitination; this modification may be important for AKT2 recruitment to the plasma membrane and for AKT2 activating phosphorylation. When phosphorylated, undergoes 'Lys-48'-polyubiquitination catalyzed by TTC3 in the nucleus, leading to its degradation by the proteasome. Post-translationally, O-GlcNAcylation at Thr-306 and Thr-313 inhibits activating phosphorylation at Thr-309 via the disruption of the interaction between AKT and PDPK1/PDK1. Widely expressed. Expressed in myoblasts.

The protein resides in the cytoplasm. It is found in the nucleus. The protein localises to the cell membrane. It localises to the early endosome. It carries out the reaction L-seryl-[protein] + ATP = O-phospho-L-seryl-[protein] + ADP + H(+). It catalyses the reaction L-threonyl-[protein] + ATP = O-phospho-L-threonyl-[protein] + ADP + H(+). Phosphorylation at Thr-309 (in the kinase domain) and Ser-474 (in the C-terminal regulatory region) is required for full activation. In adipocytes and hepatocytes, the activation is induced by insulin. Aminofurazans, such as 4-[2-(4-amino-2,5-dihydro-1,2,5-oxadiazol-3-yl)-6-{[(1S)-3-amino-1-phenylpropyl]oxy}-1-ethyl-1H-imidazo[4,5-c]pyridin-4-yl]-2-methylbut-3-yn-2-ol (compound 32), are potent AKT2 inhibitors. AKT2 phosphorylation of PKP1 is induced by insulin. In terms of biological role, serine/threonine kinase closely related to AKT1 and AKT3. All 3 enzymes, AKT1, AKT2 and AKT3, are collectively known as AKT kinase. AKT regulates many processes including metabolism, proliferation, cell survival, growth and angiogenesis, through the phosphorylation of a range of downstream substrates. Over 100 substrates have been reported so far, although for most of them, the precise AKT kinase catalyzing the reaction was not specified. AKT regulates glucose uptake by mediating insulin-induced translocation of the SLC2A4/GLUT4 glucose transporter to the cell surface. Phosphorylation of PTPN1 at 'Ser-50' negatively modulates its phosphatase activity preventing dephosphorylation of the insulin receptor and the attenuation of insulin signaling. Phosphorylation of TBC1D4 triggers the binding of this effector to inhibitory 14-3-3 proteins, which is required for insulin-stimulated glucose transport. AKT also regulates the storage of glucose in the form of glycogen by phosphorylating GSK3A at 'Ser-21' and GSK3B at 'Ser-9', resulting in inhibition of its kinase activity. Phosphorylation of GSK3 isoforms by AKT is also thought to be one mechanism by which cell proliferation is driven. AKT also regulates cell survival via the phosphorylation of MAP3K5 (apoptosis signal-related kinase). Phosphorylation of 'Ser-83' decreases MAP3K5 kinase activity stimulated by oxidative stress and thereby prevents apoptosis. AKT mediates insulin-stimulated protein synthesis by phosphorylating TSC2 at 'Ser-939' and 'Thr-1462', thereby activating mTORC1 signaling and leading to both phosphorylation of 4E-BP1 and in activation of RPS6KB1. AKT is involved in the phosphorylation of members of the FOXO factors (Forkhead family of transcription factors), leading to binding of 14-3-3 proteins and cytoplasmic localization. In particular, FOXO1 is phosphorylated at 'Thr-24', 'Ser-256' and 'Ser-319'. FOXO3 and FOXO4 are phosphorylated on equivalent sites. AKT has an important role in the regulation of NF-kappa-B-dependent gene transcription and positively regulates the activity of CREB1 (cyclic AMP (cAMP)-response element binding protein). The phosphorylation of CREB1 induces the binding of accessory proteins that are necessary for the transcription of pro-survival genes such as BCL2 and MCL1. AKT phosphorylates 'Ser-454' on ATP citrate lyase (ACLY), thereby potentially regulating ACLY activity and fatty acid synthesis. Activates the 3B isoform of cyclic nucleotide phosphodiesterase (PDE3B) via phosphorylation of 'Ser-273', resulting in reduced cyclic AMP levels and inhibition of lipolysis. Phosphorylates PIKFYVE on 'Ser-318', which results in increased PI(3)P-5 activity. The Rho GTPase-activating protein DLC1 is another substrate and its phosphorylation is implicated in the regulation cell proliferation and cell growth. AKT plays a role as key modulator of the AKT-mTOR signaling pathway controlling the tempo of the process of newborn neurons integration during adult neurogenesis, including correct neuron positioning, dendritic development and synapse formation. Signals downstream of phosphatidylinositol 3-kinase (PI(3)K) to mediate the effects of various growth factors such as platelet-derived growth factor (PDGF), epidermal growth factor (EGF), insulin and insulin-like growth factor 1 (IGF1). AKT mediates the antiapoptotic effects of IGF1. Essential for the SPATA13-mediated regulation of cell migration and adhesion assembly and disassembly. May be involved in the regulation of the placental development. In response to lysophosphatidic acid stimulation, inhibits the ciliogenesis cascade. In this context, phosphorylates WDR44, hence stabilizing its interaction with Rab11 and preventing the formation of the ciliogenic Rab11-FIP3-RAB3IP complex. Also phosphorylates RAB3IP/Rabin8, thus may affect RAB3IP guanine nucleotide exchange factor (GEF) activity toward Rab8, which is important for cilia growth. Phosphorylates PKP1, facilitating its interaction with YWHAG and translocation to the nucleus, ultimately resulting in a reduction in keratinocyte intercellular adhesion. Phosphorylation of PKP1 increases PKP1 protein stability, translocation to the cytoplasm away from desmosome plaques and PKP1-driven cap-dependent translation. Several AKT2-specific substrates have been identified, including ANKRD2, C2CD5, CLK2 and PITX2. May play a role in myoblast differentiation. In this context, may act through PITX2 phosphorylation. Unphosphorylated PITX2 associates with an ELAVL1/HuR-containing complex, which stabilizes CCND1 cyclin mRNA, ensuring cell proliferation. Phosphorylation by AKT2 impairs this association, leading to CCND1 mRNA destabilization and progression towards differentiation. Also involved in the negative regulation of myogenesis in response to stress conditions. In this context, acts by phosphorylating ANKRD2. May also be a key regulator of glucose uptake. Regulates insulin-stimulated glucose transport by the increase of glucose transporter GLUT4 translocation from intracellular stores to the plasma membrane. In this context, acts by phosphorylating C2CD5/CDP138 on 'Ser-197' in insulin-stimulated adipocytes. Through the phosphorylation of CLK2 on 'Thr-343', involved in insulin-regulated suppression of hepatic gluconeogenesis. This chain is RAC-beta serine/threonine-protein kinase, found in Homo sapiens (Human).